The primary structure comprises 344 residues: Thioredoxin domain-containing protein 15 (344 aa).

A signal peptide spans 1-20 (MQLLCWWQVLLWVLGLPAHG). The Extracellular segment spans residues 21–305 (LEVAEDSGHP…GPLPSTLIKT (285 aa)). Disordered regions lie at residues 55–119 (DHRD…FGLQ) and 136–156 (GVTE…SLKS). The span at 88-97 (EDQRSPEAHD) shows a compositional bias: basic and acidic residues. Residues 163–280 (ERNVTGLENF…LKIFIFNQTG (118 aa)) enclose the Thioredoxin domain. Residues Asn171, Asn178, Asn190, and Asn277 are each glycosylated (N-linked (GlcNAc...) asparagine). A helical transmembrane segment spans residues 306–326 (VDWLLVFSLFFLISFIMYATI). Residues 327 to 344 (RTESIRWLIPGQEQEHAE) are Cytoplasmic-facing.

It localises to the cell projection. Its subcellular location is the cilium membrane. Functionally, acts as a positive regulator of ciliary hedgehog signaling. Required for cilia biogenesis. The polypeptide is Thioredoxin domain-containing protein 15 (Txndc15) (Mus musculus (Mouse)).